We begin with the raw amino-acid sequence, 61 residues long: Probable tautomerase LMOf2365_2536 (61 aa).

Proline 2 acts as the Proton acceptor; via imino nitrogen in catalysis.

Belongs to the 4-oxalocrotonate tautomerase family.

This chain is Probable tautomerase LMOf2365_2536, found in Listeria monocytogenes serotype 4b (strain F2365).